Consider the following 459-residue polypeptide: uncharacterized protein (459 aa).

Positions 7–65 constitute a TRAM domain; the sequence is PVNKNEIYTLTFEDLTHEGNGVAKIEGYPLFVPEVLPDEQAKVKVVKVNKNFGFGKLLE. Residues cysteine 78, cysteine 82, cysteine 85, and cysteine 164 each contribute to the [4Fe-4S] cluster site. Residues glutamine 288, tyrosine 317, glutamate 338, and aspartate 386 each contribute to the S-adenosyl-L-methionine site. The Nucleophile role is filled by cysteine 413.

Belongs to the class I-like SAM-binding methyltransferase superfamily. RNA M5U methyltransferase family.

This is an uncharacterized protein from Oceanobacillus iheyensis (strain DSM 14371 / CIP 107618 / JCM 11309 / KCTC 3954 / HTE831).